A 2554-amino-acid chain; its full sequence is Protein sevenless (2554 aa).

Positions 1 to 10 (MTMFWQQNVD) are enriched in polar residues. Positions 1 to 25 (MTMFWQQNVDHQSDEQDKQAKGAAP) are disordered. Topologically, residues 1–2123 (MTMFWQQNVD…AEPFVSPEKR (2123 aa)) are extracellular. The segment covering 11-20 (HQSDEQDKQA) has biased composition (basic and acidic residues). Asn30 carries an N-linked (GlcNAc...) asparagine glycan. The span at 51 to 70 (NQQAPGTSSSSSNSQNASPS) shows a compositional bias: low complexity. Positions 51–75 (NQQAPGTSSSSSNSQNASPSKIVVR) are disordered. A glycan (N-linked (GlcNAc...) asparagine) is linked at Asn129. The disordered stretch occupies residues 181–208 (SRPQSTMAHHPDDRDRDRDPSEEQHGVD). Residues 189 to 208 (HHPDDRDRDRDPSEEQHGVD) show a composition bias toward basic and acidic residues. Residues 440 to 533 (APVIEHLMGL…GFVQTHSARN (94 aa)) form the Fibronectin type-III 1 domain. 4 N-linked (GlcNAc...) asparagine glycosylation sites follow: Asn481, Asn505, Asn617, and Asn647. A Fibronectin type-III 2 domain is found at 824–924 (AGGKPHSLKA…EPLAARTWPL (101 aa)). N-linked (GlcNAc...) asparagine glycosylation occurs at Asn966. The LDL-receptor class B repeat unit spans residues 1010–1053 (GRVYWTDLARNCVVRMDPWSGSRELLPVFEANFLALDPRQGHLY). Fibronectin type-III domains lie at 1202 to 1290 (LPDS…TPPV) and 1294 to 1397 (QPRR…VAPE). N-linked (GlcNAc...) asparagine glycosylation is found at Asn1228, Asn1313, Asn1353, Asn1550, Asn1557, Asn1639, Asn1725, Asn1756, Asn1804, Asn1889, Asn1947, and Asn2073. 3 Fibronectin type-III domains span residues 1801 to 1901 (PPRN…SFAE), 1902 to 1988 (LPEL…VYET), and 1995 to 2117 (QPGK…AEPF). Residues 2124 to 2147 (GSLVLAIIAPAAIVSSCVLALVLV) traverse the membrane as a helical segment. Residues 2148-2554 (RKVQKRRLRA…LYANEGVSRL (407 aa)) lie on the Cytoplasmic side of the membrane. The region spanning 2209 to 2485 (LKLLRFLGSG…RCYNTLHAIS (277 aa)) is the Protein kinase domain. ATP contacts are provided by residues 2215–2223 (LGSGAFGEV) and Lys2242. Asp2343 serves as the catalytic Proton acceptor. Tyr2380 is modified (phosphotyrosine; by autocatalysis). A compositionally biased stretch (basic and acidic residues) spans 2515–2527 (GQPLEEHREHNER). The disordered stretch occupies residues 2515–2534 (GQPLEEHREHNERPEDENLT).

This sequence belongs to the protein kinase superfamily. Tyr protein kinase family. Insulin receptor subfamily. May form a complex with drk and Sos. Binds the phosphotyrosine interaction domain (PID) of Dab.

The protein localises to the cell membrane. The enzyme catalyses L-tyrosyl-[protein] + ATP = O-phospho-L-tyrosyl-[protein] + ADP + H(+). In terms of biological role, receptor for an extracellular signal required to instruct a cell to differentiate into an R7 photoreceptor. The ligand for sev is the boss (bride of sevenless) protein on the surface of the neighboring R8 cell. This chain is Protein sevenless (sev), found in Drosophila melanogaster (Fruit fly).